Consider the following 31-residue polypeptide: U14-ctenitoxin-Co1a (31 aa).

Post-translationally, disulfide bonds are present. As to expression, expressed by the venom gland.

The protein localises to the secreted. Its function is as follows. Omega-agatoxins are antagonists of voltage-gated calcium channels (Cav). The sequence is that of U14-ctenitoxin-Co1a from Ctenus ornatus (Brazilian spider).